The sequence spans 365 residues: Aminomethyltransferase (365 aa).

This sequence belongs to the GcvT family. As to quaternary structure, the glycine cleavage system is composed of four proteins: P, T, L and H.

It catalyses the reaction N(6)-[(R)-S(8)-aminomethyldihydrolipoyl]-L-lysyl-[protein] + (6S)-5,6,7,8-tetrahydrofolate = N(6)-[(R)-dihydrolipoyl]-L-lysyl-[protein] + (6R)-5,10-methylene-5,6,7,8-tetrahydrofolate + NH4(+). The glycine cleavage system catalyzes the degradation of glycine. The protein is Aminomethyltransferase of Cronobacter sakazakii (strain ATCC BAA-894) (Enterobacter sakazakii).